Reading from the N-terminus, the 208-residue chain is Small ribosomal subunit protein uS4 (208 aa).

Positions 98-159 (RRLDNVAYRL…KSRKVAAISE (62 aa)) constitute an S4 RNA-binding domain.

This sequence belongs to the universal ribosomal protein uS4 family. Part of the 30S ribosomal subunit. Contacts protein S5. The interaction surface between S4 and S5 is involved in control of translational fidelity.

Its function is as follows. One of the primary rRNA binding proteins, it binds directly to 16S rRNA where it nucleates assembly of the body of the 30S subunit. Functionally, with S5 and S12 plays an important role in translational accuracy. In Citrifermentans bemidjiense (strain ATCC BAA-1014 / DSM 16622 / JCM 12645 / Bem) (Geobacter bemidjiensis), this protein is Small ribosomal subunit protein uS4.